The sequence spans 199 residues: Photosystem I reaction center subunit XI (199 aa).

2 helical membrane-spanning segments follow: residues 108 to 128 (LTAG…LLVL) and 165 to 185 (FWLG…TLHL).

This sequence belongs to the PsaL family.

It is found in the cellular thylakoid membrane. This is Photosystem I reaction center subunit XI from Prochlorococcus marinus (strain AS9601).